The chain runs to 488 residues: Inosine-5'-monophosphate dehydrogenase (488 aa).

CBS domains lie at 95-153 and 157-216; these read VISN…SIKI and MTQE…AKDE. NAD(+) is bound by residues Asp250 and 300–302; that span reads GIG. Positions 302 and 304 each coordinate K(+). Position 305 (Ser305) interacts with IMP. Cys307 contacts K(+). The active-site Thioimidate intermediate is the Cys307. IMP-binding positions include 340 to 342, 363 to 364, and 387 to 391; these read DGG, GS, and YRGMG. Catalysis depends on Arg403, which acts as the Proton acceptor. Glu417 serves as a coordination point for IMP. The interval 468–488 is disordered; sequence GLAESHPHNIQITKESPNYSF. Positions 471, 472, and 473 each coordinate K(+). Over residues 475-488 the composition is skewed to polar residues; that stretch reads HNIQITKESPNYSF.

Belongs to the IMPDH/GMPR family. Homotetramer. Requires K(+) as cofactor.

It carries out the reaction IMP + NAD(+) + H2O = XMP + NADH + H(+). The protein operates within purine metabolism; XMP biosynthesis via de novo pathway; XMP from IMP: step 1/1. With respect to regulation, mycophenolic acid (MPA) is a non-competitive inhibitor that prevents formation of the closed enzyme conformation by binding to the same site as the amobile flap. In contrast, mizoribine monophosphate (MZP) is a competitive inhibitor that induces the closed conformation. MPA is a potent inhibitor of mammalian IMPDHs but a poor inhibitor of the bacterial enzymes. MZP is a more potent inhibitor of bacterial IMPDH. In terms of biological role, catalyzes the conversion of inosine 5'-phosphate (IMP) to xanthosine 5'-phosphate (XMP), the first committed and rate-limiting step in the de novo synthesis of guanine nucleotides, and therefore plays an important role in the regulation of cell growth. The protein is Inosine-5'-monophosphate dehydrogenase of Staphylococcus aureus (strain MW2).